We begin with the raw amino-acid sequence, 164 residues long: NADH-quinone oxidoreductase subunit I (164 aa).

4Fe-4S ferredoxin-type domains lie at 55 to 84 and 95 to 124; these read RRYEGGEERCVACKLCEAICPAQAIYIEID and KVYDIDLFKCIYCGLCEEACPVEAIVMGPY. The [4Fe-4S] cluster site is built by C64, C67, C70, C74, C104, C107, C110, and C114.

This sequence belongs to the complex I 23 kDa subunit family. In terms of assembly, NDH-1 is composed of 14 different subunits. Subunits NuoA, H, J, K, L, M, N constitute the membrane sector of the complex. It depends on [4Fe-4S] cluster as a cofactor.

It localises to the cell inner membrane. It carries out the reaction a quinone + NADH + 5 H(+)(in) = a quinol + NAD(+) + 4 H(+)(out). In terms of biological role, NDH-1 shuttles electrons from NADH, via FMN and iron-sulfur (Fe-S) centers, to quinones in the respiratory chain. The immediate electron acceptor for the enzyme in this species is believed to be ubiquinone. Couples the redox reaction to proton translocation (for every two electrons transferred, four hydrogen ions are translocated across the cytoplasmic membrane), and thus conserves the redox energy in a proton gradient. This chain is NADH-quinone oxidoreductase subunit I, found in Magnetococcus marinus (strain ATCC BAA-1437 / JCM 17883 / MC-1).